We begin with the raw amino-acid sequence, 324 residues long: Beta-ketoacyl-[acyl-carrier-protein] synthase III (324 aa).

Catalysis depends on residues cysteine 112 and histidine 249. The tract at residues 250–254 is ACP-binding; sequence QANDR. The active site involves asparagine 279.

This sequence belongs to the thiolase-like superfamily. FabH family. As to quaternary structure, homodimer.

It is found in the cytoplasm. It catalyses the reaction malonyl-[ACP] + acetyl-CoA + H(+) = 3-oxobutanoyl-[ACP] + CO2 + CoA. It functions in the pathway lipid metabolism; fatty acid biosynthesis. Functionally, catalyzes the condensation reaction of fatty acid synthesis by the addition to an acyl acceptor of two carbons from malonyl-ACP. Catalyzes the first condensation reaction which initiates fatty acid synthesis and may therefore play a role in governing the total rate of fatty acid production. Possesses both acetoacetyl-ACP synthase and acetyl transacylase activities. Its substrate specificity determines the biosynthesis of branched-chain and/or straight-chain of fatty acids. The chain is Beta-ketoacyl-[acyl-carrier-protein] synthase III from Streptococcus pneumoniae serotype 19F (strain G54).